The sequence spans 205 residues: GTP cyclohydrolase-2 (205 aa).

Position 49-53 (49-53 (RVHSE)) interacts with GTP. Positions 54, 65, and 67 each coordinate Zn(2+). GTP is bound by residues glutamine 70, 92-94 (EGR), and threonine 114. The active-site Proton acceptor is aspartate 126. Arginine 128 acts as the Nucleophile in catalysis. Residues threonine 149 and lysine 154 each coordinate GTP.

It belongs to the GTP cyclohydrolase II family. Zn(2+) serves as cofactor.

It carries out the reaction GTP + 4 H2O = 2,5-diamino-6-hydroxy-4-(5-phosphoribosylamino)-pyrimidine + formate + 2 phosphate + 3 H(+). It functions in the pathway cofactor biosynthesis; riboflavin biosynthesis; 5-amino-6-(D-ribitylamino)uracil from GTP: step 1/4. Catalyzes the conversion of GTP to 2,5-diamino-6-ribosylamino-4(3H)-pyrimidinone 5'-phosphate (DARP), formate and pyrophosphate. This is GTP cyclohydrolase-2 from Pseudomonas syringae pv. tomato (strain ATCC BAA-871 / DC3000).